The primary structure comprises 70 residues: Large ribosomal subunit protein bL31 (70 aa).

Cys-16, Cys-18, Cys-37, and Cys-40 together coordinate Zn(2+).

The protein belongs to the bacterial ribosomal protein bL31 family. Type A subfamily. Part of the 50S ribosomal subunit. The cofactor is Zn(2+).

Its function is as follows. Binds the 23S rRNA. This chain is Large ribosomal subunit protein bL31, found in Pasteurella multocida (strain Pm70).